The sequence spans 429 residues: Glutamate-1-semialdehyde 2,1-aminomutase 2 (429 aa).

K267 carries the post-translational modification N6-(pyridoxal phosphate)lysine.

It belongs to the class-III pyridoxal-phosphate-dependent aminotransferase family. HemL subfamily. As to quaternary structure, homodimer. Requires pyridoxal 5'-phosphate as cofactor.

The protein resides in the cytoplasm. It catalyses the reaction (S)-4-amino-5-oxopentanoate = 5-aminolevulinate. It participates in porphyrin-containing compound metabolism; protoporphyrin-IX biosynthesis; 5-aminolevulinate from L-glutamyl-tRNA(Glu): step 2/2. The polypeptide is Glutamate-1-semialdehyde 2,1-aminomutase 2 (gsaB) (Bacillus subtilis (strain 168)).